A 432-amino-acid chain; its full sequence is 3-phosphoshikimate 1-carboxyvinyltransferase (432 aa).

3-phosphoshikimate contacts are provided by Lys23, Ser24, and Arg28. Lys23 serves as a coordination point for phosphoenolpyruvate. Phosphoenolpyruvate is bound by residues Gly95 and Arg123. Positions 166, 168, 315, and 342 each coordinate 3-phosphoshikimate. Phosphoenolpyruvate is bound at residue Gln168. The active-site Proton acceptor is Asp315. Residues Arg346 and Arg390 each contribute to the phosphoenolpyruvate site.

The protein belongs to the EPSP synthase family. In terms of assembly, monomer.

The protein resides in the cytoplasm. The enzyme catalyses 3-phosphoshikimate + phosphoenolpyruvate = 5-O-(1-carboxyvinyl)-3-phosphoshikimate + phosphate. It functions in the pathway metabolic intermediate biosynthesis; chorismate biosynthesis; chorismate from D-erythrose 4-phosphate and phosphoenolpyruvate: step 6/7. Functionally, catalyzes the transfer of the enolpyruvyl moiety of phosphoenolpyruvate (PEP) to the 5-hydroxyl of shikimate-3-phosphate (S3P) to produce enolpyruvyl shikimate-3-phosphate and inorganic phosphate. This is 3-phosphoshikimate 1-carboxyvinyltransferase from Lactiplantibacillus plantarum (strain ATCC BAA-793 / NCIMB 8826 / WCFS1) (Lactobacillus plantarum).